The sequence spans 648 residues: DNA ligase (648 aa).

NAD(+) is bound by residues 63-67 (DILYD) and 105-106 (ST). Catalysis depends on Lys-143, which acts as the N6-AMP-lysine intermediate. NAD(+) contacts are provided by Arg-159, Glu-190, and Lys-302. Zn(2+)-binding residues include Cys-390, Cys-393, Cys-406, and Cys-412. In terms of domain architecture, BRCT spans 570-648 (SLASPLTGKI…SEQEYLDLIS (79 aa)).

The protein belongs to the NAD-dependent DNA ligase family. LigA subfamily. The cofactor is Mg(2+). Mn(2+) serves as cofactor.

It carries out the reaction NAD(+) + (deoxyribonucleotide)n-3'-hydroxyl + 5'-phospho-(deoxyribonucleotide)m = (deoxyribonucleotide)n+m + AMP + beta-nicotinamide D-nucleotide.. DNA ligase that catalyzes the formation of phosphodiester linkages between 5'-phosphoryl and 3'-hydroxyl groups in double-stranded DNA using NAD as a coenzyme and as the energy source for the reaction. It is essential for DNA replication and repair of damaged DNA. The sequence is that of DNA ligase from Shewanella baltica (strain OS155 / ATCC BAA-1091).